The primary structure comprises 527 residues: SusD-like protein P25 (527 aa).

Positions M1–S15 are cleaved as a signal peptide. The N-palmitoyl cysteine moiety is linked to residue C16. The S-diacylglycerol cysteine moiety is linked to residue C16.

The protein belongs to the SusD family.

Its subcellular location is the cell outer membrane. In terms of biological role, polysaccharide-binding protein probably involved in ulvan degradation. Ulvan is the main polysaccharide component of the Ulvales (green seaweed) cell wall. It is composed of disaccharide building blocks comprising 3-sulfated rhamnose (Rha3S) linked to D-glucuronic acid (GlcA), L-iduronic acid (IduA), or D-xylose (Xyl). The SusD-like protein may mediate ulvan oligomer-binding before transport in the periplasm for further degradation. The polypeptide is SusD-like protein P25 (Formosa agariphila (strain DSM 15362 / KCTC 12365 / LMG 23005 / KMM 3901 / M-2Alg 35-1)).